The primary structure comprises 212 residues: EFC-associated protein OPG053 (212 aa).

Over 1 to 175 the chain is Virion surface; it reads MAETKEFKTL…IIENRLPYYD (175 aa). Intrachain disulfides connect Cys-33-Cys-55, Cys-47-Cys-127, and Cys-107-Cys-149. Residues 176–196 form a helical membrane-spanning segment; it reads PWFLVGVAIILVIFTVAICSI. The Intravirion portion of the chain corresponds to 197–212; that stretch reads RRNLALKYRYGTFLYV.

It belongs to the orthopoxvirus OPG053 family. Component of the entry fusion complex (EFC) composed of OPG053, OPG076, OPG086, OPG094, OPG095, OPG099, OPG107, OPG143, OPG104, OPG147 and OPG155. Except for OPG095 and OPG052, each of the EFC proteins is required for assembly or stability of the complex. In terms of processing, disulfid bonds are oxidized in the cytoplasm by OPG088 protein. Unglycosylated because produced in viral factories instead of the classic ER -Golgi route.

It localises to the virion membrane. Functionally, component of the entry fusion complex (EFC), which consists of 11 proteins. During cell infection, this complex mediates entry of the virion core into the host cytoplasm by a two-step mechanism consisting of lipid mixing of the viral and cellular membranes and subsequent pore formation. This chain is EFC-associated protein OPG053 (OPG053), found in Homo sapiens (Human).